The sequence spans 437 residues: Vacuolar protein sorting-associated protein 4A (437 aa).

An MIT domain is found at Thr2–His80. An N6-acetyllysine modification is found at Lys8. The stretch at Lys15–Glu37 forms a coiled coil. Residues Arg75–Lys106 form a disordered region. Residues Pro84–Asp96 are compositionally biased toward basic and acidic residues. Residues Ser95 and Ser97 each carry the phosphoserine modification. ATP is bound at residue Gly167–Ser174.

This sequence belongs to the AAA ATPase family. Proposed to be monomeric or homodimeric in nucleotide-free form and to oligomerize upon binding to ATP to form two stacked hexameric or heptameric rings with a central pore through which ESCRT-III substrates are translocated in an ATP-dependent manner. Interacts with CHMP1A, CHMP1B, CHMP2A, CHMP2B, CHMP3, CHMP4A, CHMP4B, CHMP4C and CHMP6. Interacts with VPS4B; the interaction suggests a heteromeric assembly with VPS4B. Interacts with SPAST. Interacts with IST1. Interacts with ZFYVE19/ANCHR; leading to retain it at midbody. Highly expressed in testis and moderately in heart and brain. Not detected in spleen, lung, liver, skeletal muscle or kidney.

Its subcellular location is the late endosome membrane. The protein resides in the midbody. It localises to the cytoplasm. It is found in the cytoskeleton. The protein localises to the spindle. It carries out the reaction ATP + H2O = ADP + phosphate + H(+). In terms of biological role, involved in late steps of the endosomal multivesicular bodies (MVB) pathway. Recognizes membrane-associated ESCRT-III assemblies and catalyzes their disassembly, possibly in combination with membrane fission. Redistributes the ESCRT-III components to the cytoplasm for further rounds of MVB sorting. MVBs contain intraluminal vesicles (ILVs) that are generated by invagination and scission from the limiting membrane of the endosome and mostly are delivered to lysosomes enabling degradation of membrane proteins, such as stimulated growth factor receptors, lysosomal enzymes and lipids. It is required for proper accomplishment of various processes including the regulation of endosome size, primary cilium organization, mitotic spindle organization and chromosome segregation, and nuclear envelope sealing and spindle disassembly during anaphase. In conjunction with the ESCRT machinery also appears to function in topologically equivalent membrane fission events, such as the terminal stages of cytokinesis. Involved in cytokinesis: retained at the midbody by ZFYVE19/ANCHR and CHMP4C until abscission checkpoint signaling is terminated at late cytokinesis. It is then released following dephosphorylation of CHMP4C, leading to abscission. VPS4A/B are required for the exosomal release of SDCBP, CD63 and syndecan. Critical for normal erythroblast cytokinesis and correct erythropoiesis. The chain is Vacuolar protein sorting-associated protein 4A from Mus musculus (Mouse).